The sequence spans 919 residues: Glutamate receptor ionotropic, kainate 3 (919 aa).

The first 31 residues, 1-31 (MTAPWRRLRSLVWEYWAGLLVCAFWIPDSRG), serve as a signal peptide directing secretion. Residues 32 to 563 (MPHVIRIGGI…VFSFLNPLSP (532 aa)) are Extracellular-facing. N-linked (GlcNAc...) asparagine glycans are attached at residues Asn70, Asn76, Asn278, Asn381, Asn415, Asn426, and Asn433. A disulfide bridge connects residues Cys99 and Cys350. Positions 518, 520, and 525 each coordinate L-glutamate. Residues Asn548 and Asn551 are each glycosylated (N-linked (GlcNAc...) asparagine). The chain crosses the membrane as a helical span at residues 564–584 (DIWMYVLLAYLGVSCVLFVIA). Residues 585–636 (RFSPYEWYDAHPCNPGSEVVENNFTLLNSFWFGMGSLMQQGSELMPKALSTR) lie on the Cytoplasmic side of the membrane. The helical transmembrane segment at 637–657 (IIGGIWWFFTLIIISSYTANL) threads the bilayer. Residues 658 to 820 (AAFLTVERME…KEASALGIQK (163 aa)) lie on the Extracellular side of the membrane. The L-glutamate site is built by Ala691, Thr692, and Glu739. An N-linked (GlcNAc...) asparagine glycan is attached at Asn752. The chain crosses the membrane as a helical span at residues 821-841 (IGGIFIVLAAGLVLSVLVAVG). Topologically, residues 842 to 919 (EFVYKLRKTA…CSTSLAPVFP (78 aa)) are cytoplasmic. Ser869 is subject to Phosphoserine. Lys887 participates in a covalent cross-link: Glycyl lysine isopeptide (Lys-Gly) (interchain with G-Cter in SUMO1).

The protein belongs to the glutamate-gated ion channel (TC 1.A.10.1) family. GRIK3 subfamily. Homotetramer, and heterotetramer with either GRIK4 or GRIK5. Can form functional heteromeric receptors with GRIK2. Interacts with PRKCABP. Interacts with NETO2.

The protein localises to the cell membrane. It is found in the postsynaptic cell membrane. It catalyses the reaction Ca(2+)(in) = Ca(2+)(out). In terms of biological role, ionotropic glutamate receptor that functions as a cation-permeable ligand-gated ion channel, gated by L-glutamate and the glutamatergic agonist kainic acid. Binding of the excitatory neurotransmitter L-glutamate induces a conformation change, leading to the opening of the cation channel, and thereby converts the chemical signal to an electrical impulse. The receptor then desensitizes rapidly and enters a transient inactive state, characterized by the presence of bound agonist. In association with GRIK2, involved in presynaptic facilitation of glutamate release at hippocampal mossy fiber synapses. In Macaca fascicularis (Crab-eating macaque), this protein is Glutamate receptor ionotropic, kainate 3 (GRIK3).